A 300-amino-acid polypeptide reads, in one-letter code: Ribosomal RNA small subunit methyltransferase H (300 aa).

Residues 38-40, E55, I85, D102, and H109 each bind S-adenosyl-L-methionine; that span reads GGH.

It belongs to the methyltransferase superfamily. RsmH family.

It localises to the cytoplasm. It carries out the reaction cytidine(1402) in 16S rRNA + S-adenosyl-L-methionine = N(4)-methylcytidine(1402) in 16S rRNA + S-adenosyl-L-homocysteine + H(+). Its function is as follows. Specifically methylates the N4 position of cytidine in position 1402 (C1402) of 16S rRNA. The chain is Ribosomal RNA small subunit methyltransferase H from Brachyspira hyodysenteriae (strain ATCC 49526 / WA1).